The following is a 662-amino-acid chain: UvrABC system protein B (662 aa).

Residues 31 to 188 (DNIEGGEKAQ…NDLVDIQFER (158 aa)) enclose the Helicase ATP-binding domain. Residue 44-51 (GATGTGKT) participates in ATP binding. The short motif at 97–120 (YYDYYQPEAYVPSSDTYIEKDSSV) is the Beta-hairpin element. Positions 435–601 (QIDDLLGEIN…TIKKEIRDLI (167 aa)) constitute a Helicase C-terminal domain. The 36-residue stretch at 626–661 (KELVKKLEKQMQEAVEVLDFELAAQIRDMMLEVKAL) folds into the UVR domain.

Belongs to the UvrB family. Forms a heterotetramer with UvrA during the search for lesions. Interacts with UvrC in an incision complex.

Its subcellular location is the cytoplasm. In terms of biological role, the UvrABC repair system catalyzes the recognition and processing of DNA lesions. A damage recognition complex composed of 2 UvrA and 2 UvrB subunits scans DNA for abnormalities. Upon binding of the UvrA(2)B(2) complex to a putative damaged site, the DNA wraps around one UvrB monomer. DNA wrap is dependent on ATP binding by UvrB and probably causes local melting of the DNA helix, facilitating insertion of UvrB beta-hairpin between the DNA strands. Then UvrB probes one DNA strand for the presence of a lesion. If a lesion is found the UvrA subunits dissociate and the UvrB-DNA preincision complex is formed. This complex is subsequently bound by UvrC and the second UvrB is released. If no lesion is found, the DNA wraps around the other UvrB subunit that will check the other stand for damage. The sequence is that of UvrABC system protein B from Streptococcus pneumoniae (strain ATCC 700669 / Spain 23F-1).